Reading from the N-terminus, the 101-residue chain is Small ribosomal subunit protein uS14A (101 aa).

Disordered stretches follow at residues M1–Y20 and T28–G72. Basic and acidic residues-rich tracts occupy residues E38–R53 and R61–P70.

It belongs to the universal ribosomal protein uS14 family. Part of the 30S ribosomal subunit. Contacts proteins S3 and S10.

Functionally, binds 16S rRNA, required for the assembly of 30S particles and may also be responsible for determining the conformation of the 16S rRNA at the A site. The chain is Small ribosomal subunit protein uS14A from Streptomyces avermitilis (strain ATCC 31267 / DSM 46492 / JCM 5070 / NBRC 14893 / NCIMB 12804 / NRRL 8165 / MA-4680).